Here is a 303-residue protein sequence, read N- to C-terminus: Bifunctional protein FolD (303 aa).

NADP(+) contacts are provided by residues glycine 168–serine 170, threonine 197, and valine 238.

It belongs to the tetrahydrofolate dehydrogenase/cyclohydrolase family. As to quaternary structure, homodimer.

It carries out the reaction (6R)-5,10-methylene-5,6,7,8-tetrahydrofolate + NADP(+) = (6R)-5,10-methenyltetrahydrofolate + NADPH. The catalysed reaction is (6R)-5,10-methenyltetrahydrofolate + H2O = (6R)-10-formyltetrahydrofolate + H(+). It functions in the pathway one-carbon metabolism; tetrahydrofolate interconversion. Catalyzes the oxidation of 5,10-methylenetetrahydrofolate to 5,10-methenyltetrahydrofolate and then the hydrolysis of 5,10-methenyltetrahydrofolate to 10-formyltetrahydrofolate. The protein is Bifunctional protein FolD of Desulfosudis oleivorans (strain DSM 6200 / JCM 39069 / Hxd3) (Desulfococcus oleovorans).